Here is a 194-residue protein sequence, read N- to C-terminus: Anthranilate synthase component 2 (194 aa).

The 193-residue stretch at 2–194 folds into the Glutamine amidotransferase type-1 domain; it reads KIFFIDNFDS…QSVGFLEGLL (193 aa). Residue 57–59 coordinates L-glutamine; that stretch reads GPG. The active-site Nucleophile; for GATase activity is the C84. L-glutamine-binding positions include Q88 and 134–135; that span reads SL. Active-site for GATase activity residues include H170 and E172.

Heterotetramer consisting of two non-identical subunits: a beta subunit (TrpG) and a large alpha subunit (TrpE).

The catalysed reaction is chorismate + L-glutamine = anthranilate + pyruvate + L-glutamate + H(+). It participates in amino-acid biosynthesis; L-tryptophan biosynthesis; L-tryptophan from chorismate: step 1/5. In terms of biological role, part of a heterotetrameric complex that catalyzes the two-step biosynthesis of anthranilate, an intermediate in the biosynthesis of L-tryptophan. In the first step, the glutamine-binding beta subunit (TrpG) of anthranilate synthase (AS) provides the glutamine amidotransferase activity which generates ammonia as a substrate that, along with chorismate, is used in the second step, catalyzed by the large alpha subunit of AS (TrpE) to produce anthranilate. In the absence of TrpG, TrpE can synthesize anthranilate directly from chorismate and high concentrations of ammonia. The protein is Anthranilate synthase component 2 (trpG) of Helicobacter pylori (strain ATCC 700392 / 26695) (Campylobacter pylori).